Consider the following 171-residue polypeptide: Myosin regulatory light chain 12A (171 aa).

At Thr18 the chain carries Phosphothreonine; by MLCK. At Ser19 the chain carries Phosphoserine; by MLCK. EF-hand domains lie at 28-63 (SQIQ…LGKN), 97-132 (DPED…MGDR), and 133-168 (FTDE…GAKD). Ca(2+)-binding residues include Asp41, Asn43, Asp45, and Asp52.

Myosin is a hexamer of 2 heavy chains and 4 light chains. Phosphorylation increases the actin-activated myosin ATPase activity and thereby regulates the contractile activity. It is required to generate the driving force in the migration of the cells but not necessary for localization of myosin-2 at the leading edge.

In terms of biological role, myosin regulatory subunit that plays an important role in regulation of both smooth muscle and nonmuscle cell contractile activity via its phosphorylation. Implicated in cytokinesis, receptor capping, and cell locomotion. This Homo sapiens (Human) protein is Myosin regulatory light chain 12A (MYL12A).